A 93-amino-acid chain; its full sequence is Small ribosomal subunit protein mS33 (93 aa).

The protein belongs to the mitochondrion-specific ribosomal protein mS33 family. As to quaternary structure, component of the mitochondrial small ribosomal subunit (mt-SSU). Mature yeast 74S mitochondrial ribosomes consist of a small (37S) and a large (54S) subunit. The 37S small subunit contains a 15S ribosomal RNA (15S mt-rRNA) and at least 32 different proteins. The 54S large subunit contains a 21S rRNA (21S mt-rRNA) and at least 45 different proteins.

The protein resides in the mitochondrion. Functionally, component of the mitochondrial ribosome (mitoribosome), a dedicated translation machinery responsible for the synthesis of mitochondrial genome-encoded proteins, including at least some of the essential transmembrane subunits of the mitochondrial respiratory chain. The mitoribosomes are attached to the mitochondrial inner membrane and translation products are cotranslationally integrated into the membrane. This chain is Small ribosomal subunit protein mS33 (rsm27), found in Schizosaccharomyces pombe (strain 972 / ATCC 24843) (Fission yeast).